Consider the following 861-residue polypeptide: Cone cGMP-specific 3',5'-cyclic phosphodiesterase subunit alpha' (861 aa).

GAF domains lie at 75 to 224 (SAEQ…AVAL) and 256 to 433 (DVER…GWSL). Residues S97, N116, 169–172 (DKQT), and T176 contribute to the 3',5'-cyclic GMP site. A PDEase domain is found at 486-819 (EERQLLAILK…VEWKSLAEEY (334 aa)). H562 (proton donor) is an active-site residue. 4 residues coordinate a divalent metal cation: H566, H602, D603, and D723. Basic and acidic residues predominate over residues 826–839 (TEEEAGKQEEEASD). The disordered stretch occupies residues 826–861 (TEEEAGKQEEEASDGKAATDLGGSAEDKKSKTCLML). A Cysteine methyl ester modification is found at C858. The S-geranylgeranyl cysteine moiety is linked to residue C858. Residues 859–861 (LML) constitute a propeptide, removed in mature form.

Belongs to the cyclic nucleotide phosphodiesterase family. As to quaternary structure, composed of two alpha' subunits that are associated with 3 smaller proteins of 11, 13, and 15 kDa. Requires a divalent metal cation as cofactor.

The protein localises to the cell membrane. It catalyses the reaction 3',5'-cyclic GMP + H2O = GMP + H(+). Functionally, as cone-specific cGMP phosphodiesterase, it plays an essential role in light detection and cone phototransduction by rapidly decreasing intracellular levels of cGMP. In Mus musculus (Mouse), this protein is Cone cGMP-specific 3',5'-cyclic phosphodiesterase subunit alpha' (Pde6c).